The chain runs to 501 residues: V-type proton ATPase subunit B 2 (501 aa).

Arg392 lines the ATP pocket.

This sequence belongs to the ATPase alpha/beta chains family. In terms of assembly, V-ATPase is a heteromultimeric enzyme made up of two complexes: the ATP-hydrolytic V1 complex and the proton translocation V0 complex. The V1 complex consists of three catalytic AB heterodimers that form a heterohexamer, three peripheral stalks each consisting of EG heterodimers, one central rotor including subunits D and F, and the regulatory subunits C and H. The proton translocation complex V0 consists of the proton transport subunit a, a ring of proteolipid subunits c9c'', rotary subunit d, subunits e and f, and the accessory subunits vah-19/Ac45 and vah-20/PRR. As to expression, predominantly expressed in male and hermaphrodite testis (at protein level).

It is found in the cytoplasm. Functionally, non-catalytic subunit of the V1 complex of vacuolar(H+)-ATPase (V-ATPase), a multisubunit enzyme composed of a peripheral complex (V1) that hydrolyzes ATP and a membrane integral complex (V0) that translocates protons. V-ATPase is responsible for acidifying and maintaining the pH of intracellular compartments and in some cell types, is targeted to the plasma membrane, where it is responsible for acidifying the extracellular environment. In neurons, required for necrotic cell death probably by promoting intracellular acidification. Required for spermatogenesis where it regulates the fibrous body-membranous organelle (FBMO) morphology in spermatocytes and the acidification of FBMO-derived secretory membranous organelles (MOs) as spermatids mature. In Caenorhabditis elegans, this protein is V-type proton ATPase subunit B 2.